The sequence spans 385 residues: MAVPPSAPVPCSPFYLRRQEACPQCSWSMEEKAVASASCWEPPGPPRAAVPCFAIAVDQDDILPGALRLIRELRPHWKPEQVRTKRFKDGITNKLLACYVEEDMRDCVLVRVYGEWTELLVDRENEIRNFQLLRAHGCAPKLYCTFQNGLCYEYMQGVALGPEHIREPQLFRLIALEMAKIHTIHANGSLPKPTLWHKMHRYFTLVKDEISPSLSADVPKVEVLEQELAWLKEHLSQLDSPVVFCHNDLLCKNIIYDSDKGHVRFIDYEYAGYNYQAFDIGNHFNEFAGVNEVDYCRYPAREIQLQWLRYYLEAQKGTAASPREVERLYAQVNKFALASHFFWALWALIQNQYSTINFDFLRYAVIRFNQYFKVKPQVSALEMPK.

Belongs to the choline/ethanolamine kinase family.

The enzyme catalyses ethanolamine + ATP = phosphoethanolamine + ADP + H(+). The protein operates within phospholipid metabolism; phosphatidylethanolamine biosynthesis; phosphatidylethanolamine from ethanolamine: step 1/3. Highly specific for ethanolamine phosphorylation. Does not have choline kinase activity. In Rattus norvegicus (Rat), this protein is Ethanolamine kinase 2 (Etnk2).